The sequence spans 106 residues: MSDLISYDDVIDAAYDIFLEMAPDNLEPADVILFTAQFEDRGAAELVETGDDWVEHVGFDIDKEVYAEVRIGLVNEENDVLDDVFARMLISRDPEHKFCHMLWKRD.

It belongs to the putative dsDNA mimic protein family.

Its function is as follows. May act as a double-stranded DNA (dsDNA) mimic. Probably regulates the activity of a dsDNA-binding protein. The protein is Putative double-stranded DNA mimic protein VIBHAR_02752 of Vibrio campbellii (strain ATCC BAA-1116).